A 365-amino-acid polypeptide reads, in one-letter code: MRRVILTTGGTGGHIFPALAVAEEIRARYPECSVLFMGGLYGPEADLAARAGLDFVGLPVRGVLGRGVRAIGAAFGMAAGIARAYAVMGRFDPDIVLGFGGYAAFAGVLAARLRGRPAAIHEQNSVPGVTNRVLSRVVPRVFLSLPDTLGAFPPQKTCLAGNPVRASIVACGAERSDPRPDHVRRLLVMGGSLGARAINDAVVSSLPALAEAGVEVWHQTGAADWERIRKAYAETGHGEGRVEAFIDDVASAYAWADLVLCRAGATSVAELAVAGKPAVLVPYPFATHDHQTHNARWLVSRGAAVLLEQKDISMTDVPALLVGLLSDRARLNRMAVSARAQGRPDAAAAVVDGLVELLKTTPRAR.

UDP-N-acetyl-alpha-D-glucosamine contacts are provided by residues 11 to 13, Asn-124, Arg-165, Ser-192, Ile-246, and Gln-291; that span reads TGG.

Belongs to the glycosyltransferase 28 family. MurG subfamily.

The protein resides in the cell inner membrane. It carries out the reaction di-trans,octa-cis-undecaprenyl diphospho-N-acetyl-alpha-D-muramoyl-L-alanyl-D-glutamyl-meso-2,6-diaminopimeloyl-D-alanyl-D-alanine + UDP-N-acetyl-alpha-D-glucosamine = di-trans,octa-cis-undecaprenyl diphospho-[N-acetyl-alpha-D-glucosaminyl-(1-&gt;4)]-N-acetyl-alpha-D-muramoyl-L-alanyl-D-glutamyl-meso-2,6-diaminopimeloyl-D-alanyl-D-alanine + UDP + H(+). The protein operates within cell wall biogenesis; peptidoglycan biosynthesis. Its function is as follows. Cell wall formation. Catalyzes the transfer of a GlcNAc subunit on undecaprenyl-pyrophosphoryl-MurNAc-pentapeptide (lipid intermediate I) to form undecaprenyl-pyrophosphoryl-MurNAc-(pentapeptide)GlcNAc (lipid intermediate II). The chain is UDP-N-acetylglucosamine--N-acetylmuramyl-(pentapeptide) pyrophosphoryl-undecaprenol N-acetylglucosamine transferase from Nitratidesulfovibrio vulgaris (strain DP4) (Desulfovibrio vulgaris).